A 488-amino-acid polypeptide reads, in one-letter code: Sucrose phosphorylase (488 aa).

Sucrose contacts are provided by residues Asp-50, His-88, 191-193 (RLD), Glu-233, 290-291 (HD), 341-344 (DLYQ), and Arg-398. Asp-193 functions as the Nucleophile in the catalytic mechanism. Catalysis depends on Glu-233, which acts as the Proton donor.

The protein belongs to the glycosyl hydrolase 13 family. Sucrose phosphorylase subfamily.

The catalysed reaction is sucrose + phosphate = D-fructose + alpha-D-glucose 1-phosphate. The sequence is that of Sucrose phosphorylase from Agrobacterium vitis (Rhizobium vitis).